A 145-amino-acid polypeptide reads, in one-letter code: D-aminoacyl-tRNA deacylase (145 aa).

A Gly-cisPro motif, important for rejection of L-amino acids motif is present at residues 137–138 (GP).

The protein belongs to the DTD family. As to quaternary structure, homodimer.

It localises to the cytoplasm. It catalyses the reaction glycyl-tRNA(Ala) + H2O = tRNA(Ala) + glycine + H(+). The enzyme catalyses a D-aminoacyl-tRNA + H2O = a tRNA + a D-alpha-amino acid + H(+). Its function is as follows. An aminoacyl-tRNA editing enzyme that deacylates mischarged D-aminoacyl-tRNAs. Also deacylates mischarged glycyl-tRNA(Ala), protecting cells against glycine mischarging by AlaRS. Acts via tRNA-based rather than protein-based catalysis; rejects L-amino acids rather than detecting D-amino acids in the active site. By recycling D-aminoacyl-tRNA to D-amino acids and free tRNA molecules, this enzyme counteracts the toxicity associated with the formation of D-aminoacyl-tRNA entities in vivo and helps enforce protein L-homochirality. This chain is D-aminoacyl-tRNA deacylase, found in Pseudomonas fluorescens (strain Pf0-1).